A 318-amino-acid polypeptide reads, in one-letter code: Melanocyte-stimulating hormone receptor (318 aa).

Residues 1 to 37 (MPMQGAQRKLLGSLNSTPTATSNLGLAANRTGAPCLE) lie on the Extracellular side of the membrane. Asn-29 carries an N-linked (GlcNAc...) asparagine glycan. A helical transmembrane segment spans residues 38–63 (LPIPNGLFLSLGLVSLVENVLVVAAI). At 64 to 72 (AKNRNLHSS) the chain is on the cytoplasmic side. Residues 73 to 93 (MYCFICCLALSDLLVSGSNML) traverse the membrane as a helical segment. At 94-118 (ETAVILLLEAGVLATRASVVQQLHN) the chain is on the extracellular side. A helical transmembrane segment spans residues 119–140 (TIDVLTCSSMLCSLCFLGAIAV). Residues 141–163 (DRYISIFYALRYHSIMTLPRAQR) are Cytoplasmic-facing. The chain crosses the membrane as a helical span at residues 164-183 (AVAAIWVASVLSSTLFITYY). Residues 184 to 191 (DHAAVLLC) are Extracellular-facing. Residues 192 to 211 (LMVFFLAMLVLMAVLYVHML) traverse the membrane as a helical segment. Residues 212–240 (ARARQHAQGIIRLHKRQPPAHKGFGLRGA) are Cytoplasmic-facing. Residues 241–266 (ATLTILLGIFFLCWGPFFLCLTLVVF) traverse the membrane as a helical segment. Residues 267 to 279 (CPQHLTCNCIFKN) lie on the Extracellular side of the membrane. The helical transmembrane segment at 280–300 (FKVFLTLIICNTIIDPLIYAF) threads the bilayer. Residues 301–317 (RSQELRRMLKEVLGRGR) lie on the Cytoplasmic side of the membrane.

It belongs to the G-protein coupled receptor 1 family. Interacts with MGRN1, but does not undergo MGRN1-mediated ubiquitination; this interaction competes with GNAS-binding and thus inhibits agonist-induced cAMP production. Interacts with OPN3; the interaction results in a decrease in MC1R-mediated cAMP signaling and ultimately a decrease in melanin production in melanocytes.

It is found in the cell membrane. In terms of biological role, receptor for MSH (alpha, beta and gamma) and ACTH. The activity of this receptor is mediated by G proteins which activate adenylate cyclase. Mediates melanogenesis, the production of eumelanin (black/brown) and phaeomelanin (red/yellow), via regulation of cAMP signaling in melanocytes. The protein is Melanocyte-stimulating hormone receptor (MC1R) of Leontopithecus rosalia (Golden lion tamarin).